A 351-amino-acid chain; its full sequence is Dihydroorotate dehydrogenase (quinone) (351 aa).

FMN is bound by residues 65–69 (AGLDK) and Thr-89. Lys-69 serves as a coordination point for substrate. 114-118 (NRLGF) contributes to the substrate binding site. The FMN site is built by Asn-150 and Asn-183. Asn-183 contributes to the substrate binding site. Ser-186 (nucleophile) is an active-site residue. Substrate is bound at residue Asn-188. Positions 228 and 256 each coordinate FMN. A substrate-binding site is contributed by 257–258 (NT). Residues Gly-279, Gly-308, and 329 to 330 (YT) contribute to the FMN site.

Belongs to the dihydroorotate dehydrogenase family. Type 2 subfamily. Monomer. The cofactor is FMN.

The protein localises to the cell membrane. It carries out the reaction (S)-dihydroorotate + a quinone = orotate + a quinol. It participates in pyrimidine metabolism; UMP biosynthesis via de novo pathway; orotate from (S)-dihydroorotate (quinone route): step 1/1. Catalyzes the conversion of dihydroorotate to orotate with quinone as electron acceptor. This chain is Dihydroorotate dehydrogenase (quinone), found in Acidovorax ebreus (strain TPSY) (Diaphorobacter sp. (strain TPSY)).